Here is a 311-residue protein sequence, read N- to C-terminus: Malate dehydrogenase (311 aa).

NAD(+) is bound by residues 7 to 13 (GAAGGIG) and Asp34. The substrate site is built by Arg81 and Arg87. Residues Asn94 and 117–119 (ITN) contribute to the NAD(+) site. Substrate contacts are provided by Asn119 and Arg153. The Proton acceptor role is filled by His177. Residue Met227 coordinates NAD(+).

It belongs to the LDH/MDH superfamily. MDH type 1 family. Homodimer.

It carries out the reaction (S)-malate + NAD(+) = oxaloacetate + NADH + H(+). In terms of biological role, catalyzes the reversible oxidation of malate to oxaloacetate. This is Malate dehydrogenase from Haemophilus influenzae (strain 86-028NP).